Consider the following 445-residue polypeptide: MAAPEEQDLTQEQTEKLLQFQDLTGIESMEQCRLALEQHNWNMEAAVQDRLNEQEGVPSVFNPPPARPLQVNTADHRIYSYVVSRPQPRGLLGWGYYLIMLPFRFTYYTILDIFRFALRFIRPDPRSRVTDPVGDIVSFMHSFEEKYGRAHPVFYQGTYSQALNDAKRELRFLLVYLHGDDHQDSDEFCRNALCAPEVISLINSRMLFWACSTNKPEGYRVSQALRENTYPFLAMIMLKDRRMTVVGRLEGLIQPDDLINQLTFIMDANQTYLVSERLEREERNQTQVLRQQQDEAYLASLRADQEKERKKREEKERKRRKEEEVQQQKLAEERRRQNLQEEKERKLECLPPEPSPDDPESVKIIFKLPNDSRVERRFHFSQSLTVIHDFLFSLKESPEKFQIEANFPRRVLPCVPSEEWPNPPTLQEAGLSHTEVLFVQDLTDE.

Ala-2 is subject to N-acetylalanine. The region spanning 12 to 48 (EQTEKLLQFQDLTGIESMEQCRLALEQHNWNMEAAVQ) is the UBA domain. Lys-167 carries the N6-acetyllysine modification. A coiled-coil region spans residues 275–350 (SERLEREERN…EEKERKLECL (76 aa)). The segment at 300–361 (SLRADQEKER…PEPSPDDPES (62 aa)) is disordered. The segment covering 303–348 (ADQEKERKKREEKERKRRKEEEVQQQKLAEERRRQNLQEEKERKLE) has biased composition (basic and acidic residues). The region spanning 357-439 (DDPESVKIIF…GLSHTEVLFV (83 aa)) is the UBX domain.

As to quaternary structure, identified in a complex that contains SEL1L, OS9, FAF2/UBXD8, UBE2J1/UBC6E and AUP1. Interacts with YOD1. Interacts (via N-terminus) with UBQLN2 (via C-terminus). Interacts with PNPLA2. Interacts with ZFAND2B; probably through VCP. Interacts with LMBR1L and UBAC2.

Its subcellular location is the cytoplasm. The protein localises to the lipid droplet. It localises to the endoplasmic reticulum. Functionally, plays an important role in endoplasmic reticulum-associated degradation (ERAD) that mediates ubiquitin-dependent degradation of misfolded endoplasmic reticulum proteins. By controlling the steady-state expression of the IGF1R receptor, indirectly regulates the insulin-like growth factor receptor signaling pathway. Involved in inhibition of lipid droplet degradation by binding to phospholipase PNPL2 and inhibiting its activity by promoting dissociation of PNPL2 from its endogenous activator, ABHD5 which inhibits the rate of triacylglycerol hydrolysis. Involved in stress granule disassembly: associates with ubiquitinated G3BP1 in response to heat shock, thereby promoting interaction between ubiquitinated G3BP1 and VCP, followed by G3BP1 extraction from stress granules and stress granule disassembly. The polypeptide is FAS-associated factor 2 (Faf2) (Mus musculus (Mouse)).